The chain runs to 72 residues: Exodeoxyribonuclease 7 small subunit (72 aa).

The protein belongs to the XseB family. In terms of assembly, heterooligomer composed of large and small subunits.

It localises to the cytoplasm. It catalyses the reaction Exonucleolytic cleavage in either 5'- to 3'- or 3'- to 5'-direction to yield nucleoside 5'-phosphates.. Functionally, bidirectionally degrades single-stranded DNA into large acid-insoluble oligonucleotides, which are then degraded further into small acid-soluble oligonucleotides. The polypeptide is Exodeoxyribonuclease 7 small subunit (Chlamydia trachomatis serovar L2 (strain ATCC VR-902B / DSM 19102 / 434/Bu)).